The chain runs to 190 residues: Xanthine phosphoribosyltransferase (190 aa).

Xanthine is bound by residues L20 and N27. 128–132 (ANGHA) contributes to the 5-phospho-alpha-D-ribose 1-diphosphate binding site. K156 is a binding site for xanthine.

The protein belongs to the purine/pyrimidine phosphoribosyltransferase family. Xpt subfamily. As to quaternary structure, homodimer.

Its subcellular location is the cytoplasm. The catalysed reaction is XMP + diphosphate = xanthine + 5-phospho-alpha-D-ribose 1-diphosphate. Its pathway is purine metabolism; XMP biosynthesis via salvage pathway; XMP from xanthine: step 1/1. Converts the preformed base xanthine, a product of nucleic acid breakdown, to xanthosine 5'-monophosphate (XMP), so it can be reused for RNA or DNA synthesis. The protein is Xanthine phosphoribosyltransferase of Pseudomonas aeruginosa (strain ATCC 15692 / DSM 22644 / CIP 104116 / JCM 14847 / LMG 12228 / 1C / PRS 101 / PAO1).